The sequence spans 244 residues: MAAAAAAPASSEKEVLPPSLTSSSEPPPLFDGTTRLYVAYHCPYAQRAWIARNYKGLQDKIKIVAIDLADRPAWYKEKVYPENKVPSLEHNNQVKGESLDLVKYIDTNFEGPALLPDDSEKQQFAEELLAYTDAFNKASYSSIVAKGDVCDEAVAALDKIEAALSKFNDGPFFLGQFSLVDIAYVPFIERFQIFFSGIKNYDITKGRPNLQKFIEEVNKIHAYTETKQDPQFLLEHTKKRLGIA.

The interval 1–27 is disordered; sequence MAAAAAAPASSEKEVLPPSLTSSSEPP. Positions 32-113 constitute a GST N-terminal domain; it reads GTTRLYVAYH…YIDTNFEGPA (82 aa). Glutathione is bound by residues Val85 and 97-98; that span reads ES. The region spanning 118–241 is the GST C-terminal domain; sequence DSEKQQFAEE…FLLEHTKKRL (124 aa).

The polypeptide is Protein IN2-1 homolog B (GSTZ5) (Oryza sativa subsp. indica (Rice)).